Consider the following 221-residue polypeptide: Josephin-like protein (221 aa).

A disordered region spans residues 1 to 37 (MESPSARTLGNSLGDDSGNGNENGNGSGNGNTTMMPH). Residues 9–20 (LGNSLGDDSGNG) are compositionally biased toward low complexity. In terms of domain architecture, Josephin spans 36–214 (PHGIYHERQT…DCKDKSQQRW (179 aa)). Residue Cys-49 is the Nucleophile of the active site. His-152 functions as the Proton acceptor in the catalytic mechanism.

It catalyses the reaction Thiol-dependent hydrolysis of ester, thioester, amide, peptide and isopeptide bonds formed by the C-terminal Gly of ubiquitin (a 76-residue protein attached to proteins as an intracellular targeting signal).. In terms of biological role, may act as a deubiquitinating enzyme. In Drosophila melanogaster (Fruit fly), this protein is Josephin-like protein.